Reading from the N-terminus, the 475-residue chain is Maintenance of mitochondrial morphology protein 1 (475 aa).

Topologically, residues 1-14 (MSETFSPNLTFTEG) are lumenal. Residues 15–35 (FVLGQASFLIILLLFIRYVVF) traverse the membrane as a helical segment. The Cytoplasmic portion of the chain corresponds to 36–475 (SPSEQIDHEG…VTPGQVGTSR (440 aa)). Residues 80–278 (PAESSDWVNV…HPNHISLALP (199 aa)) enclose the SMP-LTD domain. Disordered stretches follow at residues 321-381 (NPVE…GQPQ) and 394-475 (SYPH…GTSR). Pro residues predominate over residues 341 to 351 (PPTPLVQPPGT). Composition is skewed to polar residues over residues 353–380 (PTLSVSSRQSHRQSLPPSRPQSTTQGQP) and 394–403 (SYPHYNTYTL). Residues 442 to 464 (STTSSLTPSQSQSQFRFRGQFAS) show a composition bias toward low complexity.

The protein belongs to the MMM1 family. As to quaternary structure, homodimer. Component of the ER-mitochondria encounter structure (ERMES) or MDM complex, composed of MMM1, MDM10, MDM12 and MDM34. An MMM1 homodimer associates with one molecule of MDM12 on each side in a pairwise head-to-tail manner, and the SMP-LTD domains of MMM1 and MDM12 generate a continuous hydrophobic tunnel for phospholipid trafficking.

The protein localises to the endoplasmic reticulum membrane. Component of the ERMES/MDM complex, which serves as a molecular tether to connect the endoplasmic reticulum (ER) and mitochondria. Components of this complex are involved in the control of mitochondrial shape and protein biogenesis, and function in nonvesicular lipid trafficking between the ER and mitochondria. The MDM12-MMM1 subcomplex functions in the major beta-barrel assembly pathway that is responsible for biogenesis of all outer membrane beta-barrel proteins, and acts in a late step after the SAM complex. The MDM10-MDM12-MMM1 subcomplex further acts in the TOM40-specific pathway after the action of the MDM12-MMM1 complex. Essential for establishing and maintaining the structure of mitochondria and maintenance of mtDNA nucleoids. The chain is Maintenance of mitochondrial morphology protein 1 from Cryptococcus neoformans var. neoformans serotype D (strain B-3501A) (Filobasidiella neoformans).